We begin with the raw amino-acid sequence, 98 residues long: Small proline-rich protein 2B (98 aa).

Tandem repeats lie at residues 21–29 (PKCPEPCPP), 30–38 (PKCPEPCPP), 39–47 (PVCCEPCPP), 48–56 (PKCPEPCPP), and 57–65 (PVCCEPCPP). The tract at residues 21-65 (PKCPEPCPPPKCPEPCPPPVCCEPCPPPKCPEPCPPPVCCEPCPP) is 5 X 9 AA approximate tandem repeats.

This sequence belongs to the cornifin (SPRR) family. In terms of tissue distribution, expressed in uterus.

Its subcellular location is the cytoplasm. Cross-linked envelope protein of keratinocytes. It is a keratinocyte protein that first appears in the cell cytosol, but ultimately becomes cross-linked to membrane proteins by transglutaminase. All that results in the formation of an insoluble envelope beneath the plasma membrane. This chain is Small proline-rich protein 2B (Sprr2b), found in Mus musculus (Mouse).